Here is a 257-residue protein sequence, read N- to C-terminus: Imidazole glycerol phosphate synthase subunit HisF (257 aa).

Active-site residues include Asp-11 and Asp-130.

The protein belongs to the HisA/HisF family. As to quaternary structure, heterodimer of HisH and HisF.

Its subcellular location is the cytoplasm. The catalysed reaction is 5-[(5-phospho-1-deoxy-D-ribulos-1-ylimino)methylamino]-1-(5-phospho-beta-D-ribosyl)imidazole-4-carboxamide + L-glutamine = D-erythro-1-(imidazol-4-yl)glycerol 3-phosphate + 5-amino-1-(5-phospho-beta-D-ribosyl)imidazole-4-carboxamide + L-glutamate + H(+). The protein operates within amino-acid biosynthesis; L-histidine biosynthesis; L-histidine from 5-phospho-alpha-D-ribose 1-diphosphate: step 5/9. In terms of biological role, IGPS catalyzes the conversion of PRFAR and glutamine to IGP, AICAR and glutamate. The HisF subunit catalyzes the cyclization activity that produces IGP and AICAR from PRFAR using the ammonia provided by the HisH subunit. The chain is Imidazole glycerol phosphate synthase subunit HisF from Bradyrhizobium diazoefficiens (strain JCM 10833 / BCRC 13528 / IAM 13628 / NBRC 14792 / USDA 110).